We begin with the raw amino-acid sequence, 176 residues long: Ribosome maturation factor RimM (176 aa).

Residues 99 to 174 (KNEFYITDLI…IVLIQPEIWN (76 aa)) form the PRC barrel domain.

This sequence belongs to the RimM family. Binds ribosomal protein uS19.

The protein resides in the cytoplasm. Functionally, an accessory protein needed during the final step in the assembly of 30S ribosomal subunit, possibly for assembly of the head region. Essential for efficient processing of 16S rRNA. May be needed both before and after RbfA during the maturation of 16S rRNA. It has affinity for free ribosomal 30S subunits but not for 70S ribosomes. The protein is Ribosome maturation factor RimM of Leptospira interrogans serogroup Icterohaemorrhagiae serovar copenhageni (strain Fiocruz L1-130).